The following is a 397-amino-acid chain: MEVNYDVLVIGAGPAGSSAARFAARKGLKTLLIEKRPDIGSPVRCGEGVSKSWMPEVELKPEDHWISDEVKGARIYGPSEKKPIMLTAENAGNEVGYVVERDKFDKHIAALAASEGADVWVKSPALSVIKDGNRIVGAKVRHNSEIVDVRAKMVIAADGFESEFGRWAGLKSLILAKNDIISCVEYRMINVDSDEDYTDFYLGSCAPAGYIWVFPKGKHEANVGIGVTISKMRDRFDVKNYLDAFIKSHPGYSKGKTIQLITGGVSVSKVRDKFTLPGLLTVGDAARLIDPITGGGIANGMISGKYAAEVSKKAIDNEDYSQEMMNNYERMVKDKFERKHLRNWFAKEKLGTLSDETLDKLVDVIADVKINEISVEEILKAVQLKYPELVEELESLI.

Ala15, Glu34, Cys45, Gly46, Gly48, Arg101, Ala125, Glu163, Asp284, Gly296, and Ile297 together coordinate FAD. Residues Lys339 and Val375 each contribute to the a 2,3-bis-O-(geranylgeranyl)-sn-glycerol 1-phospholipid site.

It belongs to the geranylgeranyl reductase family. DGGGPL reductase subfamily. The cofactor is FAD.

It catalyses the reaction 2,3-bis-O-(phytanyl)-sn-glycerol 1-phosphate + 8 NADP(+) = 2,3-bis-O-(geranylgeranyl)-sn-glycerol 1-phosphate + 8 NADPH + 8 H(+). The catalysed reaction is 2,3-bis-O-(phytanyl)-sn-glycerol 1-phosphate + 8 NAD(+) = 2,3-bis-O-(geranylgeranyl)-sn-glycerol 1-phosphate + 8 NADH + 8 H(+). The enzyme catalyses a 2,3-bis-O-phytanyl-sn-glycerol 1-phospholipid + 8 A = a 2,3-bis-O-(geranylgeranyl)-sn-glycerol 1-phospholipid + 8 AH2. It carries out the reaction CDP-2,3-bis-O-(geranylgeranyl)-sn-glycerol + 8 AH2 = CDP-2,3-bis-O-(phytanyl)-sn-glycerol + 8 A. It catalyses the reaction archaetidylserine + 8 AH2 = 2,3-bis-O-phytanyl-sn-glycero-3-phospho-L-serine + 8 A. It participates in membrane lipid metabolism; glycerophospholipid metabolism. Its function is as follows. Is involved in the reduction of 2,3-digeranylgeranylglycerophospholipids (unsaturated archaeols) into 2,3-diphytanylglycerophospholipids (saturated archaeols) in the biosynthesis of archaeal membrane lipids. Catalyzes the formation of archaetidic acid (2,3-di-O-phytanyl-sn-glyceryl phosphate) from 2,3-di-O-geranylgeranylglyceryl phosphate (DGGGP) via the hydrogenation of each double bond of the isoprenoid chains. Is also probably able to reduce double bonds of geranyl groups in CDP-2,3-bis-O-(geranylgeranyl)-sn-glycerol and archaetidylserine, thus acting at various stages in the biosynthesis of archaeal membrane lipids. In Picrophilus torridus (strain ATCC 700027 / DSM 9790 / JCM 10055 / NBRC 100828 / KAW 2/3), this protein is Digeranylgeranylglycerophospholipid reductase.